Here is a 210-residue protein sequence, read N- to C-terminus: Large ribosomal subunit protein uL4 (210 aa).

Residues 41 to 51 (QNNARQGNASA) show a composition bias toward polar residues. Residues 41 to 77 (QNNARQGNASAKTRAEVRGGGRKPWKQKGTGRARAGS) form a disordered region. A compositionally biased stretch (basic residues) spans 60-71 (GGRKPWKQKGTG).

Belongs to the universal ribosomal protein uL4 family. In terms of assembly, part of the 50S ribosomal subunit.

One of the primary rRNA binding proteins, this protein initially binds near the 5'-end of the 23S rRNA. It is important during the early stages of 50S assembly. It makes multiple contacts with different domains of the 23S rRNA in the assembled 50S subunit and ribosome. In terms of biological role, forms part of the polypeptide exit tunnel. The chain is Large ribosomal subunit protein uL4 from Synechocystis sp. (strain ATCC 27184 / PCC 6803 / Kazusa).